A 95-amino-acid polypeptide reads, in one-letter code: Small ribosomal subunit protein bS6 (95 aa).

Belongs to the bacterial ribosomal protein bS6 family.

Functionally, binds together with bS18 to 16S ribosomal RNA. This Thermoanaerobacter pseudethanolicus (strain ATCC 33223 / 39E) (Clostridium thermohydrosulfuricum) protein is Small ribosomal subunit protein bS6.